Consider the following 125-residue polypeptide: uncharacterized protein (125 aa).

Positions 14–112 constitute an HTH hxlR-type domain; sequence CPVEFTLDVI…WGESNRDVLE (99 aa).

This is an uncharacterized protein from Bacillus subtilis (strain 168).